The sequence spans 384 residues: MGERKGTNKYYPPDFDPAKHGSLNGYRNSHPLRERARKLSQGILIIRFEMPYNIWCDGCKNHIGMGVRYNAEKKKVGNYYTTPIYRFRMKCHLCVNYIEMQTDPASCDYVIVSGAQRKEERWDMQDNEQILTTEHEQKQRLETDSMFRLEHGVQDKAKLQRAAPSLSELQEVQSAWKDDFAINSLLRSKFREEKKQIKEEEERDQALLTKASLDLKLVPEVEEDKKIAALLKYRSLESYEQKQKKKRSEICNRSWFSPGVDSGQQAPGNTMRKLGIRTKTPSVPGISPVSLGVVRRTSKEENKAEDKSVESPDGSRSRKAEGMCRKEETGCKEEITERTQSECKLNTELTLTTSTLAAQGQTPTIHTVSCLVPNYSDSSCESEG.

Residues 1-28 (MGERKGTNKYYPPDFDPAKHGSLNGYRN) form a disordered region. The stretch at 183–212 (NSLLRSKFREEKKQIKEEEERDQALLTKAS) forms a coiled coil. Residues 275-331 (GIRTKTPSVPGISPVSLGVVRRTSKEENKAEDKSVESPDGSRSRKAEGMCRKEETGC) are disordered. The span at 297-331 (TSKEENKAEDKSVESPDGSRSRKAEGMCRKEETGC) shows a compositional bias: basic and acidic residues.

This sequence belongs to the CWC16 family.

The protein localises to the nucleus. Functionally, may be involved in mRNA splicing. This is Probable splicing factor YJU2B (yju2b) from Xenopus laevis (African clawed frog).